The following is a 618-amino-acid chain: DNA ligase 2 (618 aa).

Over residues 197-208 the composition is skewed to basic and acidic residues; that stretch reads DKKTLESREDAK. A disordered region spans residues 197 to 250; sequence DKKTLESREDAKSVPPASQPEITNKISGDTSPNTSESVQTKKSDPDTSSNVDPS. Residues 216–234 are compositionally biased toward polar residues; sequence PEITNKISGDTSPNTSESV. Glu312 provides a ligand contact to ATP. Catalysis depends on Lys314, which acts as the N6-AMP-lysine intermediate. Residues Arg319, Arg334, Glu363, Phe403, Arg476, and Lys482 each contribute to the ATP site. Positions 459–480 are disordered; it reads HEGVMLKDPDSTYNPGSRGQHW.

Belongs to the ATP-dependent DNA ligase family. Mg(2+) serves as cofactor.

It catalyses the reaction ATP + (deoxyribonucleotide)n-3'-hydroxyl + 5'-phospho-(deoxyribonucleotide)m = (deoxyribonucleotide)n+m + AMP + diphosphate.. Its function is as follows. DNA ligase that seals nicks in double-stranded DNA during DNA replication, DNA recombination and DNA repair. The chain is DNA ligase 2 from Haloquadratum walsbyi (strain DSM 16790 / HBSQ001).